A 237-amino-acid chain; its full sequence is Ribosomal RNA small subunit methyltransferase G (237 aa).

Residues G78, F83, 129–130 (AE), and R148 each bind S-adenosyl-L-methionine. The interval 218–237 (KKETPNKYPRKAGMPNKRPL) is disordered.

The protein belongs to the methyltransferase superfamily. RNA methyltransferase RsmG family.

It localises to the cytoplasm. Specifically methylates the N7 position of a guanine in 16S rRNA. The protein is Ribosomal RNA small subunit methyltransferase G of Streptococcus gordonii (strain Challis / ATCC 35105 / BCRC 15272 / CH1 / DL1 / V288).